A 471-amino-acid chain; its full sequence is Putative multidrug resistance protein MdtD (471 aa).

Over 1–11 (MTDLPDSTRWQ) the chain is Periplasmic. A helical transmembrane segment spans residues 12–32 (LWIVAFGFFMQSLDTTIVNTA). Residues 33–48 (LPSMAQSLGESPLHMH) are Cytoplasmic-facing. Residues 49–69 (MVIVSYVLTVAVMLPASGWLA) form a helical membrane-spanning segment. Over 70–76 (DKVGVRN) the chain is Periplasmic. A helical membrane pass occupies residues 77–97 (IFFTAIVLFTLGSLFCALSGT). Residues 98–101 (LNEL) are Cytoplasmic-facing. The chain crosses the membrane as a helical span at residues 102 to 124 (LLARALQGVGGAMMVPVGRLTVM). The Periplasmic segment spans residues 125–137 (KIVPREQYMAAMT). The chain crosses the membrane as a helical span at residues 138–158 (FVTLPGQIGPLLGPALGGLLV). Over 159 to 164 (EYASWH) the chain is Cytoplasmic. Residues 165–185 (WIFLINIPVGIIGAITTLMLM) form a helical membrane-spanning segment. Residues 186 to 196 (PNYTMQTRRFD) are Periplasmic-facing. A helical transmembrane segment spans residues 197-217 (LSGFLLLAVGMAVLTLALDGS). Over 218–224 (KGTGFSP) the chain is Cytoplasmic. A helical membrane pass occupies residues 225–245 (LAIAGLVAVGVVALVLYLLHA). Residues 246–262 (QNNNRALFSLKLFRTRT) are Periplasmic-facing. The chain crosses the membrane as a helical span at residues 263–283 (FSLGLAGSFAGRIGSGMLPFM). Topologically, residues 284–285 (TP) are cytoplasmic. The helical transmembrane segment at 286–306 (VFLQIGFGFSPFHAGLMMIPM) threads the bilayer. Residues 307–341 (VLGSMGMKRIVVQVVNRFGYRRVLVATTLGLSLVT) are Periplasmic-facing. A helical membrane pass occupies residues 342–362 (LLFMTTALLGWYYVLPFVLFL). At 363-395 (QGMVNSTRFSSMNTLTLKDLPDNLASSGNSLLS) the chain is on the cytoplasmic side. A helical transmembrane segment spans residues 396-416 (MIMQLSMSIGVTIAGLLLGLF). The Periplasmic portion of the chain corresponds to 417 to 430 (GSQHVSVDSGTTQT). A helical membrane pass occupies residues 431-451 (VFMYTWLSMASIIALPAFIFA). Residues 452–471 (RVPNDTHQNVAISRRKRSAQ) lie on the Cytoplasmic side of the membrane.

The protein belongs to the major facilitator superfamily. TCR/Tet family.

It is found in the cell inner membrane. This chain is Putative multidrug resistance protein MdtD, found in Escherichia coli O6:H1 (strain CFT073 / ATCC 700928 / UPEC).